We begin with the raw amino-acid sequence, 289 residues long: D-alanine aminotransferase (289 aa).

Tyr31 lines the substrate pocket. Arg50 is a binding site for pyridoxal 5'-phosphate. Residues Arg99 and His101 each coordinate substrate. An N6-(pyridoxal phosphate)lysine modification is found at Lys147. Glu179 serves as a coordination point for pyridoxal 5'-phosphate.

Belongs to the class-IV pyridoxal-phosphate-dependent aminotransferase family. Homodimer. Requires pyridoxal 5'-phosphate as cofactor.

It catalyses the reaction D-alanine + 2-oxoglutarate = D-glutamate + pyruvate. Its function is as follows. Acts on the D-isomers of alanine, leucine, aspartate, glutamate, aminobutyrate, norvaline and asparagine. The enzyme transfers an amino group from a substrate D-amino acid to the pyridoxal phosphate cofactor to form pyridoxamine and an alpha-keto acid in the first half-reaction. The second half-reaction is the reverse of the first, transferring the amino group from the pyridoxamine to a second alpha-keto acid to form the product D-amino acid via a ping-pong mechanism. This is an important process in the formation of D-alanine and D-glutamate, which are essential bacterial cell wall components. The polypeptide is D-alanine aminotransferase (dat) (Listeria monocytogenes serotype 1/2a (strain 10403S)).